The primary structure comprises 201 residues: Putative tRNA-binding protein YtpR (201 aa).

Positions V90 to Q200 constitute a tRNA-binding domain.

The chain is Putative tRNA-binding protein YtpR (ytpR) from Bacillus subtilis (strain 168).